We begin with the raw amino-acid sequence, 358 residues long: Zinc transporter ZIP1 (358 aa).

The Extracellular segment spans residues 1 to 7; it reads MDLLFAK. The chain crosses the membrane as a helical span at residues 8–28; the sequence is IICIGIFLVVTTFGCFIPHLM. Residues 29–53 are Cytoplasmic-facing; sequence GLYKEKENEEKNKRVKNILSNLNCF. A helical transmembrane segment spans residues 54 to 74; sequence GSGFIFSIIMFHLLPETIHII. Over 75–91 the chain is Extracellular; sequence SDHGNIRIFNTSDSQMK. Residues 92-112 form a helical membrane-spanning segment; it reads ILYIFFFVFIGFCMQLGLEYV. Topologically, residues 113–186 are cytoplasmic; the sequence is LPVDTNICCV…GKFLEILTLQ (74 aa). A helical transmembrane segment spans residues 187–207; it reads SFFLTISLAIHSCIEGMIIGT. Topologically, residues 208–213 are extracellular; it reads STDVNY. A helical transmembrane segment spans residues 214-234; it reads VFISSFCILLHKWIAGVTVSL. Residues 235-246 lie on the Cytoplasmic side of the membrane; that stretch reads SLNSNNMNKTLK. Residues 247-267 traverse the membrane as a helical segment; that stretch reads AILLLTFVFASPLGIVLGHMA. Over 268 to 273 the chain is Extracellular; the sequence is KSAGQK. A helical membrane pass occupies residues 274–294; the sequence is VTCLINAVSIGTLLFIGCEIL. The Cytoplasmic portion of the chain corresponds to 295 to 310; the sequence is LNEIKQNISRKVRLCK. A helical membrane pass occupies residues 311 to 331; sequence WLSFCFSCLIAFALISFTTSM. Topologically, residues 332–358 are extracellular; that stretch reads APHTHGDIDTHVHVHHHDHDHDHGHNH.

This sequence belongs to the ZIP transporter (TC 2.A.5) family. As to quaternary structure, homodimer.

The protein resides in the plastid. The protein localises to the apicoplast. It localises to the cell membrane. The enzyme catalyses Zn(2+)(in) = Zn(2+)(out). The catalysed reaction is Fe(2+)(in) = Fe(2+)(out). Transporter for the divalent zinc cation. Mediates the influx of zinc into cells from extracellular space. Can transport divalent iron ions. Does not transport manganese and cadmium cations. The polypeptide is Zinc transporter ZIP1 (Plasmodium falciparum (isolate 3D7)).